The primary structure comprises 399 residues: MGALTSPRKVVVLGSTGSIGLSTLSLFEESGAPVQILALTAGRNVERLIEQARRWKPSLAVIEDESRLDDLRAGLAGTGVEAAAGADAVRDAAAMGADWVMSAIVGAAGLAPTVAAARTGAVIALANKESLVCAGPALLAIAKAAGGSVIPVDSEHSAIFQVLQSECAHRVSRLILTASGGPFRTWDKAAMARATPEQAIAHPNWSMGAKISVDSATMMNKGLEMIEASYLFATPEDRVDVVIHPQSVIHSLVEYVDGSTLAQLGPPDMRAPIACAFAWPDRLPWPAPRLDLAAYGQLTFESPDVERFPAIGIAREALRLGGGAPAAMNAANEVAVAAFLDRRIGFLDIAGAVAGTLERMNSLGDLSVAESDAVETAMLIDGSARRIAAEVVAQKRQRA.

NADPH contacts are provided by T16, G17, S18, I19, G42, R43, N44, and N127. K128 is a binding site for 1-deoxy-D-xylulose 5-phosphate. E129 is an NADPH binding site. D153 provides a ligand contact to Mn(2+). S154, E155, S179, and H202 together coordinate 1-deoxy-D-xylulose 5-phosphate. E155 is a Mn(2+) binding site. G208 contributes to the NADPH binding site. S215, N220, K221, and E224 together coordinate 1-deoxy-D-xylulose 5-phosphate. A Mn(2+)-binding site is contributed by E224.

The protein belongs to the DXR family. Mg(2+) serves as cofactor. Requires Mn(2+) as cofactor.

It carries out the reaction 2-C-methyl-D-erythritol 4-phosphate + NADP(+) = 1-deoxy-D-xylulose 5-phosphate + NADPH + H(+). The protein operates within isoprenoid biosynthesis; isopentenyl diphosphate biosynthesis via DXP pathway; isopentenyl diphosphate from 1-deoxy-D-xylulose 5-phosphate: step 1/6. Catalyzes the NADPH-dependent rearrangement and reduction of 1-deoxy-D-xylulose-5-phosphate (DXP) to 2-C-methyl-D-erythritol 4-phosphate (MEP). The protein is 1-deoxy-D-xylulose 5-phosphate reductoisomerase of Caulobacter vibrioides (strain NA1000 / CB15N) (Caulobacter crescentus).